The sequence spans 163 residues: Large ribosomal subunit protein uL15 (163 aa).

It belongs to the universal ribosomal protein uL15 family. Part of the 50S ribosomal subunit.

Its function is as follows. Binds to the 23S rRNA. This is Large ribosomal subunit protein uL15 from Orientia tsutsugamushi (strain Boryong) (Rickettsia tsutsugamushi).